Consider the following 436-residue polypeptide: Arginine biosynthesis bifunctional protein ArgJ, mitochondrial (436 aa).

Residues threonine 172, lysine 198, threonine 209, glutamate 298, asparagine 431, and serine 436 each coordinate substrate. Catalysis depends on threonine 209, which acts as the Nucleophile.

Belongs to the ArgJ family. Heterodimer of an alpha and a beta chain. In terms of processing, the alpha and beta chains are autoproteolytically processed from a single precursor protein within the mitochondrion.

The protein resides in the mitochondrion matrix. It catalyses the reaction N(2)-acetyl-L-ornithine + L-glutamate = N-acetyl-L-glutamate + L-ornithine. It carries out the reaction L-glutamate + acetyl-CoA = N-acetyl-L-glutamate + CoA + H(+). Its pathway is amino-acid biosynthesis; L-arginine biosynthesis; L-ornithine and N-acetyl-L-glutamate from L-glutamate and N(2)-acetyl-L-ornithine (cyclic): step 1/1. The protein operates within amino-acid biosynthesis; L-arginine biosynthesis; N(2)-acetyl-L-ornithine from L-glutamate: step 1/4. Catalyzes two activities which are involved in the cyclic version of arginine biosynthesis: the synthesis of acetylglutamate from glutamate and acetyl-CoA, and of ornithine by transacetylation between acetylornithine and glutamate. The protein is Arginine biosynthesis bifunctional protein ArgJ, mitochondrial of Meyerozyma guilliermondii (strain ATCC 6260 / CBS 566 / DSM 6381 / JCM 1539 / NBRC 10279 / NRRL Y-324) (Yeast).